A 49-amino-acid polypeptide reads, in one-letter code: YLDPGLGAPAPYPDPLEPKREVCELNPDCDELADHIGFQEAYRRFYGIA.

Residues 1 to 47 (YLDPGLGAPAPYPDPLEPKREVCELNPDCDELADHIGFQEAYRRFYG) enclose the Gla domain. Proline 9 is subject to Hydroxyproline. The Ca(2+) site is built by glutamate 17, glutamate 21, glutamate 24, and aspartate 30. Residues glutamate 17, glutamate 21, and glutamate 24 each carry the 4-carboxyglutamate modification. Residues cysteine 23 and cysteine 29 are joined by a disulfide bond.

It belongs to the osteocalcin/matrix Gla protein family. In terms of processing, gamma-carboxyglutamate residues are formed by vitamin K dependent carboxylation by GGCX. These residues are essential for the binding of calcium. Decarboxylation promotes the hormone activity.

The protein localises to the secreted. Its function is as follows. The carboxylated form is one of the main organic components of the bone matrix, which constitutes 1-2% of the total bone protein. It acts as a negative regulator of bone formation and is required to limit bone formation without impairing bone resorption or mineralization. The carboxylated form binds strongly to apatite and calcium. The uncarboxylated form acts as a hormone secreted by osteoblasts, which regulates different cellular processes, such as energy metabolism, male fertility and brain development. Regulates of energy metabolism by acting as a hormone favoring pancreatic beta-cell proliferation, insulin secretion and sensitivity and energy expenditure. Uncarboxylated osteocalcin hormone also promotes testosterone production in the testes: acts as a ligand for G protein-coupled receptor GPRC6A at the surface of Leydig cells, initiating a signaling response that promotes the expression of enzymes required for testosterone synthesis in a CREB-dependent manner. Also acts as a regulator of brain development: osteocalcin hormone crosses the blood-brain barrier and acts as a ligand for GPR158 on neurons, initiating a signaling response that prevents neuronal apoptosis in the hippocampus, favors the synthesis of all monoamine neurotransmitters and inhibits that of gamma-aminobutyric acid (GABA). Osteocalcin also crosses the placenta during pregnancy and maternal osteocalcin is required for fetal brain development. This chain is Osteocalcin (BGLAP), found in Capra hircus (Goat).